The following is a 189-amino-acid chain: Capsid protein (189 aa).

This sequence belongs to the tymoviruses capsid protein family.

It is found in the virion. In terms of biological role, self-assembles to form a T=3 icosahedral capsid composed of 180 copies of the capsid protein. The capsid encapsulates the single-stranded RNA genome. A pentameric unit may be lost during decapsidation. The sequence is that of Capsid protein from Brassica.